We begin with the raw amino-acid sequence, 38 residues long: Very early lactation protein (38 aa).

In terms of assembly, homodimer. Post-translationally, O-glycosylated. Contains sialic acid residues. In terms of tissue distribution, found in the whey fraction of milk (at protein level).

Its subcellular location is the secreted. The chain is Very early lactation protein from Trichosurus vulpecula (Brush-tailed possum).